The chain runs to 218 residues: N-(5'-phosphoribosyl)anthranilate isomerase (218 aa).

Belongs to the TrpF family.

The enzyme catalyses N-(5-phospho-beta-D-ribosyl)anthranilate = 1-(2-carboxyphenylamino)-1-deoxy-D-ribulose 5-phosphate. The protein operates within amino-acid biosynthesis; L-tryptophan biosynthesis; L-tryptophan from chorismate: step 3/5. The protein is N-(5'-phosphoribosyl)anthranilate isomerase of Alcanivorax borkumensis (strain ATCC 700651 / DSM 11573 / NCIMB 13689 / SK2).